A 201-amino-acid polypeptide reads, in one-letter code: Large ribosomal subunit protein uL4 (201 aa).

Positions 43–69 are disordered; it reads TKAQKTRSEVAGGGKKPWRQKGTGRAR.

The protein belongs to the universal ribosomal protein uL4 family. As to quaternary structure, part of the 50S ribosomal subunit.

Its function is as follows. One of the primary rRNA binding proteins, this protein initially binds near the 5'-end of the 23S rRNA. It is important during the early stages of 50S assembly. It makes multiple contacts with different domains of the 23S rRNA in the assembled 50S subunit and ribosome. In terms of biological role, forms part of the polypeptide exit tunnel. This chain is Large ribosomal subunit protein uL4, found in Idiomarina loihiensis (strain ATCC BAA-735 / DSM 15497 / L2-TR).